The chain runs to 373 residues: Ferroptosis suppressor protein 1 (373 aa).

G2 carries N-myristoyl glycine lipidation. The helical transmembrane segment at 13–29 (VVVVGGGFGGTAAASLL) threads the bilayer. 6-hydroxy-FAD is bound by residues 17–21 (GGGFG), R53, and V81. K167 bears the N6-acetyllysine mark. Residue D284 participates in 6-hydroxy-FAD binding.

The protein belongs to the FAD-dependent oxidoreductase family. The cofactor is 6-hydroxy-FAD. In terms of processing, N-myristoylation at Gly-2 mediates the recruitment to lipid droplets and plasma membrane. Acetylation at Lys-167 prevents AIFM2 ubiquitination and degradation, thereby inhibiting ferroptosis. KAT2B mediates acetylation at Lys-167, while HDAC3 removes it. Post-translationally, ubiquitinated. AIFM2 undergoes 'Lys-29'-ubiquitination and proteasomal degradation, which is inhibited by acetylation at Lys-167.

Its subcellular location is the lipid droplet. The protein resides in the cell membrane. It is found in the cytoplasm. It localises to the mitochondrion membrane. The protein localises to the nucleus. It carries out the reaction ubiquinone-10 + NADH + H(+) = ubiquinol-10 + NAD(+). The enzyme catalyses phylloquinone + NADH + H(+) = phylloquinol + NAD(+). It catalyses the reaction menaquinone-4 + NADH + H(+) = menaquinol-4 + NAD(+). The catalysed reaction is menadione + NADH + H(+) = menadiol + NAD(+). The modification by 4-hydroxy-2-nonenal (HNE) adduction in mitochondria results in loss of the oxidoreductase activity and activation of a novel function in mitochondrial oxidative stress signaling. Its function is as follows. An NAD(P)H-dependent oxidoreductase that acts as a key inhibitor of ferroptosis. At the plasma membrane, catalyzes reduction of coenzyme Q/ubiquinone-10 to ubiquinol-10, a lipophilic radical-trapping antioxidant that prevents lipid oxidative damage and consequently ferroptosis. Acts in parallel to GPX4 to suppress phospholipid peroxidation and ferroptosis. This anti-ferroptotic function is independent of cellular glutathione levels. Also acts as a potent radical-trapping antioxidant by mediating warfarin-resistant vitamin K reduction in the canonical vitamin K cycle: catalyzes NAD(P)H-dependent reduction of vitamin K (phylloquinone, menaquinone-4 and menadione) to hydroquinone forms. Hydroquinones act as potent radical-trapping antioxidants inhibitor of phospholipid peroxidation and ferroptosis. May play a role in mitochondrial stress signaling. Upon oxidative stress, associates with the lipid peroxidation end product 4-hydroxy-2-nonenal (HNE) forming a lipid adduct devoid of oxidoreductase activity, which then translocates from mitochondria into the nucleus triggering DNA damage and cell death. This chain is Ferroptosis suppressor protein 1 (AIFM2), found in Taeniopygia guttata (Zebra finch).